A 1267-amino-acid polypeptide reads, in one-letter code: Clustered mitochondria protein homolog (1267 aa).

7 TPR repeats span residues 64 to 102, 420 to 453, 716 to 749, 795 to 830, 904 to 939, 1010 to 1043, and 1138 to 1171; these read YNLK…KPYN, YSFV…LNML, EAHE…MIKE, LVPL…IPAL, RSIC…KSRA, AEKY…YERV, and AYIK…FTKE. The region spanning 329–586 is the Clu domain; sequence PTNGPDYLRT…NTYPLDVEFA (258 aa). Residues 1203-1219 are compositionally biased toward polar residues; it reads QQDQTAASGLKQQPQKS. Residues 1203–1267 form a disordered region; sequence QQDQTAASGL…KSKSKGKNKK (65 aa). Over residues 1224 to 1239 the composition is skewed to basic and acidic residues; sequence NKKETTNPDLADKSVD. The segment covering 1254–1267 has biased composition (basic residues); it reads KTTKKSKSKGKNKK.

The protein belongs to the CLU family. May associate with the eukaryotic translation initiation factor 3 (eIF-3) complex.

Its subcellular location is the cytoplasm. MRNA-binding protein involved in proper cytoplasmic distribution of mitochondria. The polypeptide is Clustered mitochondria protein homolog (Candida glabrata (strain ATCC 2001 / BCRC 20586 / JCM 3761 / NBRC 0622 / NRRL Y-65 / CBS 138) (Yeast)).